The primary structure comprises 176 residues: Large ribosomal subunit protein uL10 (176 aa).

The protein belongs to the universal ribosomal protein uL10 family. In terms of assembly, part of the ribosomal stalk of the 50S ribosomal subunit. The N-terminus interacts with L11 and the large rRNA to form the base of the stalk. The C-terminus forms an elongated spine to which L12 dimers bind in a sequential fashion forming a multimeric L10(L12)X complex.

Its function is as follows. Forms part of the ribosomal stalk, playing a central role in the interaction of the ribosome with GTP-bound translation factors. The protein is Large ribosomal subunit protein uL10 of Carboxydothermus hydrogenoformans (strain ATCC BAA-161 / DSM 6008 / Z-2901).